Consider the following 168-residue polypeptide: PNTKSIDGENTSKDGFFTYVNGFIKEKLSLGGSAAIKITEFSWNKDLYELIQRFEYWTVFCTSVNTSSSEGFLIGVNYLGPYCDRAIVDGNIMHANYIFWRNSTIMALSHNSVLDTPKFKCRCNNALIVNLKEKELNEMVIGLLKKGKLLIRNNGKLLNFGNHLVNVP.

In terms of domain architecture, Nidovirus-type SAM-dependent 2'-O-MTase spans 1–165 (PNTKSIDGEN…KLLNFGNHLV (165 aa)).

The replicase polyprotein of coronaviruses is a multifunctional protein: it contains the activities necessary for the transcription of negative stranded RNA, leader RNA, subgenomic mRNAs and progeny virion RNA as well as proteinases responsible for the cleavage of the polyprotein into functional products. The protein is Replicase polyprotein 1ab (rep) of Canine coronavirus (strain Insavc-1) (CCoV).